The primary structure comprises 275 residues: D-apionate oxidoisomerase (275 aa).

NAD(+) is bound by residues 11–13 (GKM), Glu-32, and Asp-68. Zn(2+) is bound by residues His-113 and Glu-183.

The protein belongs to the ApnO family. It depends on Zn(2+) as a cofactor.

The enzyme catalyses D-apionate + NAD(+) = 3-oxoisoapionate + NADH + H(+). Its pathway is carbohydrate metabolism. Involved in catabolism of D-apiose. Catalyzes the conversion of D-apionate to 3-oxo-isoapionate. The polypeptide is D-apionate oxidoisomerase (Rhizobium rhizogenes (strain K84 / ATCC BAA-868) (Agrobacterium radiobacter)).